Consider the following 1193-residue polypeptide: MGDHLEKSQHALLNEGDENEMEIFGYRTQGCRKALCLIGSIFSLGMLPLVFYWRPAWRVWANCVPCSLQEADVVLLKTTDEFKIYSWKKVIWISLSALSSTSGLTPDHPLITDEGYIINRAIRKPDLKVRYIKVQKIRYVWNNLEGQFQKIGSLEDWLSSAKIHQKFGLGLTSEEQEIRRLICGPNAIDVEITPIWKLLIKEVLNPFYIFQLFSVCLWFSEDYKEYALAIILMSVISIALTVYDLRQQSVKLHHLVESHNSITVSVYERKAGAQDLESRLLVPGDLLILTGSRVQMPCDAILIDGSCVVDEGMLTGESIPVTKTPLSQTASSVPWKMQSEADPRRHVLFCGTEVIQAKAAGSGAVRAVVLQTGFNTAKGDLVRSILYPKPMNFKLYRDAIRFLLCLVGTATIGMVYTLCVYVLSGEPPEEVVRKALDVITIAVPPALPAALTTGIIYAQRRLKKKGIFCISPQRINVCGQLNLVCFDKTGTLTRGGLDPWGVVPCDQNGFQAVHSFASGKALPQGPLCAAMASCHSLILLDGTIQGDPLDLKMFEATKWEMTASGDDLHIKEMLAHTIVVKPTDMVGQVPAEGLAIVHQFPFSSALQRMTVIVQEMGGGRLAFMKGAPERVASFCQPDTVPTSFISELQIYTTQGFRVIALAYKKLEMDCPTTALMREKVESDLVFLGLLILENRLKEETKPVLEELISARIRTVMITGDNLQTAITVARKSGMVSEGQKVILVEANEATGSSSASISWKLVEEKKPGPFGSQDTYINIREEVPENGRDRSYHFALSGKSFHVISQYFSSLLPKILINGTIFARMSPGQKSSLVEEFQKLDYFVGMCGDGANDCGALKMAHVGISLSEQEASVASPFTSKTPNIECVPHLIKEGRAALVTSFCMFKYMALYSMIQYVGVLLLYWKTNSLSNYQFLFQDLAITTLIGVTMNLNGANPKLVPFRPAGRLISPPLLLSVVLNILLSLAMHIVGFILVQKQPWYIMDYHSVCPVRNESASALAASPSVPEKTRSNSTFASFENTTIWFLGTINCIFVALVFSKGKPFRQPTYTNYIFVLVLILQMGVCLFILFADIPEMHRRLDLLCTPVLWRVYILIMISSNFVVSLAVEKAIIENRALWIAVKRCFGYQSKSQYRIWQRNLANDSSWPPLNQTSYSDMQGVSYSNPVFESNEEQL.

Over 1-32 (MGDHLEKSQHALLNEGDENEMEIFGYRTQGCR) the chain is Cytoplasmic. The stretch at 33-53 (KALCLIGSIFSLGMLPLVFYW) is an intramembrane region. At 54–198 (RPAWRVWANC…DVEITPIWKL (145 aa)) the chain is on the cytoplasmic side. The helical transmembrane segment at 199–219 (LIKEVLNPFYIFQLFSVCLWF) threads the bilayer. Over 220–224 (SEDYK) the chain is Lumenal. The chain crosses the membrane as a helical span at residues 225 to 245 (EYALAIILMSVISIALTVYDL). At 246–401 (RQQSVKLHHL…NFKLYRDAIR (156 aa)) the chain is on the cytoplasmic side. A helical transmembrane segment spans residues 402-422 (FLLCLVGTATIGMVYTLCVYV). Over 423–437 (LSGEPPEEVVRKALD) the chain is Lumenal. Residues 438 to 458 (VITIAVPPALPAALTTGIIYA) form a helical membrane-spanning segment. Residues 459 to 901 (QRRLKKKGIF…KEGRAALVTS (443 aa)) are Cytoplasmic-facing. Aspartate 487 serves as the catalytic 4-aspartylphosphate intermediate. The Mg(2+) site is built by aspartate 849 and aspartate 853. Residues 902-922 (FCMFKYMALYSMIQYVGVLLL) traverse the membrane as a helical segment. Over 923–933 (YWKTNSLSNYQ) the chain is Lumenal. Residues 934–954 (FLFQDLAITTLIGVTMNLNGA) traverse the membrane as a helical segment. Topologically, residues 955–973 (NPKLVPFRPAGRLISPPLL) are cytoplasmic. Residues 974 to 994 (LSVVLNILLSLAMHIVGFILV) form a helical membrane-spanning segment. Residues 995-1036 (QKQPWYIMDYHSVCPVRNESASALAASPSVPEKTRSNSTFAS) lie on the Lumenal side of the membrane. Residues 1037 to 1057 (FENTTIWFLGTINCIFVALVF) traverse the membrane as a helical segment. Over 1058-1071 (SKGKPFRQPTYTNY) the chain is Cytoplasmic. The helical transmembrane segment at 1072–1092 (IFVLVLILQMGVCLFILFADI) threads the bilayer. Topologically, residues 1093 to 1105 (PEMHRRLDLLCTP) are lumenal. Residues 1106 to 1126 (VLWRVYILIMISSNFVVSLAV) traverse the membrane as a helical segment. The Cytoplasmic portion of the chain corresponds to 1127–1193 (EKAIIENRAL…PVFESNEEQL (67 aa)).

Belongs to the cation transport ATPase (P-type) (TC 3.A.3) family. Type V subfamily. Expressed in brain and stomach.

The protein localises to the early endosome membrane. It localises to the late endosome membrane. Its subcellular location is the recycling endosome membrane. The catalysed reaction is ATP + H2O = ADP + phosphate + H(+). The chain is Probable cation-transporting ATPase 13A4 (Atp13a4) from Mus musculus (Mouse).